The chain runs to 597 residues: Probable translation initiation factor IF-2 (597 aa).

The tr-type G domain maps to 13–229 (LRTPIVCVMG…LLGLAQKFLE (217 aa)). The segment at 22–29 (GHVDHGKT) is G1. 22–29 (GHVDHGKT) is a binding site for GTP. A G2 region spans residues 47 to 51 (AITQH). Residues 84-87 (DTPG) form a G3 region. Residues 84–88 (DTPGH) and 138–141 (NKID) contribute to the GTP site. A G4 region spans residues 138-141 (NKID). Residues 206–208 (SAV) are G5.

This sequence belongs to the TRAFAC class translation factor GTPase superfamily. Classic translation factor GTPase family. IF-2 subfamily.

In terms of biological role, function in general translation initiation by promoting the binding of the formylmethionine-tRNA to ribosomes. Seems to function along with eIF-2. The chain is Probable translation initiation factor IF-2 from Methanosarcina acetivorans (strain ATCC 35395 / DSM 2834 / JCM 12185 / C2A).